Reading from the N-terminus, the 404-residue chain is Argininosuccinate synthase (404 aa).

ATP-binding positions include 12 to 20 and A39; that span reads AYSGGLDTS. L-citrulline contacts are provided by Y91 and S96. Residue G121 participates in ATP binding. Residues T123, N127, and D128 each coordinate L-aspartate. An L-citrulline-binding site is contributed by N127. Positions 131, 180, 189, 265, and 277 each coordinate L-citrulline.

The protein belongs to the argininosuccinate synthase family. Type 1 subfamily. As to quaternary structure, homotetramer.

Its subcellular location is the cytoplasm. It carries out the reaction L-citrulline + L-aspartate + ATP = 2-(N(omega)-L-arginino)succinate + AMP + diphosphate + H(+). It functions in the pathway amino-acid biosynthesis; L-arginine biosynthesis; L-arginine from L-ornithine and carbamoyl phosphate: step 2/3. The polypeptide is Argininosuccinate synthase (Vibrio campbellii (strain ATCC BAA-1116)).